Here is a 226-residue protein sequence, read N- to C-terminus: UPF0502 protein Gbem_0194 (226 aa).

The protein belongs to the UPF0502 family.

In Citrifermentans bemidjiense (strain ATCC BAA-1014 / DSM 16622 / JCM 12645 / Bem) (Geobacter bemidjiensis), this protein is UPF0502 protein Gbem_0194.